The chain runs to 253 residues: MTKAQSIAEIKQLLQAPVTEEQLATFAADSRAGVQKLVVQYHKRAAKLAAQKAAFEERRQTEKALWPDYPLVAGIDEVGRGPLAGPVVTAAVILPHDFDLWQVNDSKQLSFKLKQELYREIMAQAVSVSIGIASPERIDTENIYHATELAMGEAVAGLDKQPDYLLVDAMTVPTDIPQEKLIKGDARSISIASASIVAKVIRDQLMINYDQQYPGYDLANNMGYGTAKHLAGLAELGVTPIHRRSFSPVQNAL.

In terms of domain architecture, RNase H type-2 spans 70 to 253; sequence PLVAGIDEVG…RSFSPVQNAL (184 aa). 3 residues coordinate a divalent metal cation: Asp-76, Glu-77, and Asp-168.

It belongs to the RNase HII family. The cofactor is Mn(2+). Requires Mg(2+) as cofactor.

Its subcellular location is the cytoplasm. It carries out the reaction Endonucleolytic cleavage to 5'-phosphomonoester.. Endonuclease that specifically degrades the RNA of RNA-DNA hybrids. In Latilactobacillus sakei subsp. sakei (strain 23K) (Lactobacillus sakei subsp. sakei), this protein is Ribonuclease HII.